The primary structure comprises 64 residues: Translation machinery-associated protein 7 homolog (64 aa).

The disordered stretch occupies residues 1-64 (MSGREGGKKK…GGGIKKSGKK (64 aa)). The segment covering 27 to 38 (MAFKQKQKEQQK) has biased composition (basic and acidic residues). Residues 27–50 (MAFKQKQKEQQKALEAAKANASKK) are a coiled coil. Over residues 39–50 (ALEAAKANASKK) the composition is skewed to low complexity. The span at 53-64 (LVGGGIKKSGKK) shows a compositional bias: gly residues.

This Drosophila melanogaster (Fruit fly) protein is Translation machinery-associated protein 7 homolog.